Consider the following 65-residue polypeptide: MKAQAVQKLDLAGCQAQLLVLLEEQFRLRMQHATGQLAKTSRLRTVRRDIARVRTAITVKKEAHS.

This sequence belongs to the universal ribosomal protein uL29 family.

This chain is Large ribosomal subunit protein uL29, found in Acidithiobacillus ferrooxidans (strain ATCC 23270 / DSM 14882 / CIP 104768 / NCIMB 8455) (Ferrobacillus ferrooxidans (strain ATCC 23270)).